Here is a 214-residue protein sequence, read N- to C-terminus: RING-H2 finger protein ATL67 (214 aa).

Residues 33-53 (LGFGYSIAIALGFLVLLSTVL) form a helical membrane-spanning segment. The RING-type; atypical zinc finger occupies 138–180 (CSICLCEYKEAEMLRMMPECKHYFHLCCLDAWLKLNGSCPVCR).

Belongs to the RING-type zinc finger family. ATL subfamily.

The protein resides in the membrane. The enzyme catalyses S-ubiquitinyl-[E2 ubiquitin-conjugating enzyme]-L-cysteine + [acceptor protein]-L-lysine = [E2 ubiquitin-conjugating enzyme]-L-cysteine + N(6)-ubiquitinyl-[acceptor protein]-L-lysine.. Its pathway is protein modification; protein ubiquitination. This chain is RING-H2 finger protein ATL67 (ATL67), found in Arabidopsis thaliana (Mouse-ear cress).